The following is a 190-amino-acid chain: NADH-quinone oxidoreductase subunit B (190 aa).

The [4Fe-4S] cluster site is built by cysteine 67, cysteine 68, cysteine 132, and cysteine 162.

The protein belongs to the complex I 20 kDa subunit family. As to quaternary structure, NDH-1 is composed of 14 different subunits. Subunits NuoB, C, D, E, F, and G constitute the peripheral sector of the complex. [4Fe-4S] cluster is required as a cofactor.

The protein localises to the cell inner membrane. It catalyses the reaction a quinone + NADH + 5 H(+)(in) = a quinol + NAD(+) + 4 H(+)(out). Its function is as follows. NDH-1 shuttles electrons from NADH, via FMN and iron-sulfur (Fe-S) centers, to quinones in the respiratory chain. The immediate electron acceptor for the enzyme in this species is believed to be ubiquinone. Couples the redox reaction to proton translocation (for every two electrons transferred, four hydrogen ions are translocated across the cytoplasmic membrane), and thus conserves the redox energy in a proton gradient. This Anaplasma marginale (strain Florida) protein is NADH-quinone oxidoreductase subunit B.